The primary structure comprises 357 residues: Histidinol-phosphate aminotransferase (357 aa).

At Lys212 the chain carries N6-(pyridoxal phosphate)lysine.

This sequence belongs to the class-II pyridoxal-phosphate-dependent aminotransferase family. Histidinol-phosphate aminotransferase subfamily. As to quaternary structure, homodimer. Pyridoxal 5'-phosphate serves as cofactor.

The enzyme catalyses L-histidinol phosphate + 2-oxoglutarate = 3-(imidazol-4-yl)-2-oxopropyl phosphate + L-glutamate. The protein operates within amino-acid biosynthesis; L-histidine biosynthesis; L-histidine from 5-phospho-alpha-D-ribose 1-diphosphate: step 7/9. This is Histidinol-phosphate aminotransferase from Pectobacterium carotovorum subsp. carotovorum (strain PC1).